The chain runs to 250 residues: Hydroxyacylglutathione hydrolase (250 aa).

Zn(2+)-binding residues include His-53, His-55, Asp-57, His-58, His-111, Asp-128, and His-166.

It belongs to the metallo-beta-lactamase superfamily. Glyoxalase II family. As to quaternary structure, monomer. Zn(2+) is required as a cofactor.

It carries out the reaction an S-(2-hydroxyacyl)glutathione + H2O = a 2-hydroxy carboxylate + glutathione + H(+). The protein operates within secondary metabolite metabolism; methylglyoxal degradation; (R)-lactate from methylglyoxal: step 2/2. Thiolesterase that catalyzes the hydrolysis of S-D-lactoyl-glutathione to form glutathione and D-lactic acid. In Methylobacillus flagellatus (strain ATCC 51484 / DSM 6875 / VKM B-1610 / KT), this protein is Hydroxyacylglutathione hydrolase.